Here is an 87-residue protein sequence, read N- to C-terminus: MTTKMVSSHRLLTLMVFALLLIPMISGQSSKCTKGCTSTPECNIKCMKKGGGHCQAYIGRSHGRLAIENYCCCNNYSNSPISSPVMN.

Positions 1–27 (MTTKMVSSHRLLTLMVFALLLIPMISG) are cleaved as a signal peptide. Intrachain disulfides connect Cys32-Cys73, Cys36-Cys54, Cys42-Cys71, and Cys46-Cys72.

It belongs to the DEFL family.

Its subcellular location is the secreted. The polypeptide is Putative defensin-like protein 84 (Arabidopsis thaliana (Mouse-ear cress)).